The primary structure comprises 56 residues: Protein hunchback (56 aa).

3 consecutive C2H2-type zinc fingers follow at residues 1–5, 11–33, and 39–56; these read HLRNH, FRCDKCDYQCVNKSMLNSHLKSH, and YRCADCTYATKYCHSLKL.

Belongs to the hunchback C2H2-type zinc-finger protein family.

The protein resides in the nucleus. Functionally, gap class segmentation protein that controls development of head structures. The chain is Protein hunchback (hb) from Locusta migratoria (Migratory locust).